A 206-amino-acid polypeptide reads, in one-letter code: Dephospho-CoA kinase (206 aa).

The DPCK domain occupies 4–200 (IVALTGGIGS…AYYLQLASQF (197 aa)). 12-17 (GSGKST) is a binding site for ATP.

The protein belongs to the CoaE family.

It localises to the cytoplasm. The enzyme catalyses 3'-dephospho-CoA + ATP = ADP + CoA + H(+). It participates in cofactor biosynthesis; coenzyme A biosynthesis; CoA from (R)-pantothenate: step 5/5. Catalyzes the phosphorylation of the 3'-hydroxyl group of dephosphocoenzyme A to form coenzyme A. The protein is Dephospho-CoA kinase of Escherichia coli O6:H1 (strain CFT073 / ATCC 700928 / UPEC).